The following is a 227-amino-acid chain: MSEEEVVVLNFWPSMFGARVIMALEEKEIKFEYKEEDVFGQKTDLLLQSNPVNKKIPVLIHNGKPVCESNIIVEYIDEVWKDDKTLRLLPSDPYQKSQCRFWADLIDKKVFDAGRRTWTKRGKEQEEAKQEFIEILKVLERELGDKVYFGGNDNVSMVDLVLISYYPWFHTWETIGGFSVEDHTPKLMDWIRKCLTRPAISKSLPDPLKIFDRVTQIIKVHEFFYGY.

Residues 4-84 (EEVVVLNFWP…YIDEVWKDDK (81 aa)) enclose the GST N-terminal domain. Residues 14–15 (SM), 41–42 (QK), 55–56 (KI), and 68–69 (ES) each bind glutathione. The GST C-terminal domain maps to 92-217 (DPYQKSQCRF…LKIFDRVTQI (126 aa)).

It belongs to the GST superfamily. Tau family.

It is found in the cytoplasm. The protein resides in the cytosol. The catalysed reaction is RX + glutathione = an S-substituted glutathione + a halide anion + H(+). Functionally, may be involved in the conjugation of reduced glutathione to a wide number of exogenous and endogenous hydrophobic electrophiles and have a detoxification role against certain herbicides. The sequence is that of Glutathione S-transferase U27 (GSTU27) from Arabidopsis thaliana (Mouse-ear cress).